The chain runs to 355 residues: Agamous-like MADS-box protein AGL81 (355 aa).

The segment at 1 to 22 (MAIRSLPSSSRCSSSSSSSSYS) is disordered. An MADS-box domain is found at 26–68 (TSLSNRLETIFKKASELCTLCDIEACVIYYGPDGELKTWPPER). The span at 162–174 (VESQKHKETKPDH) shows a compositional bias: basic and acidic residues. Positions 162–186 (VESQKHKETKPDHQSLASSSLNHQT) are disordered. A compositionally biased stretch (polar residues) spans 176-186 (SLASSSLNHQT).

Interacts with MEE14/CBP1.

It is found in the nucleus. In terms of biological role, probable transcription factor that may function in the maintenance of the proper function of the central cell in pollen tube attraction. The chain is Agamous-like MADS-box protein AGL81 from Arabidopsis thaliana (Mouse-ear cress).